Here is a 117-residue protein sequence, read N- to C-terminus: UPF0342 protein OB1136 (117 aa).

Belongs to the UPF0342 family.

This Oceanobacillus iheyensis (strain DSM 14371 / CIP 107618 / JCM 11309 / KCTC 3954 / HTE831) protein is UPF0342 protein OB1136.